We begin with the raw amino-acid sequence, 324 residues long: Delta-aminolevulinic acid dehydratase (324 aa).

Zn(2+) is bound by residues Cys118, Cys120, and Cys128. Residue Lys195 is the Schiff-base intermediate with substrate of the active site. 5-aminolevulinate-binding residues include Arg205 and Arg217. Glu233 lines the Mg(2+) pocket. Lys248 functions as the Schiff-base intermediate with substrate in the catalytic mechanism. Positions 274 and 313 each coordinate 5-aminolevulinate.

Belongs to the ALAD family. Homooctamer. Zn(2+) is required as a cofactor.

It carries out the reaction 2 5-aminolevulinate = porphobilinogen + 2 H2O + H(+). Its pathway is porphyrin-containing compound metabolism; protoporphyrin-IX biosynthesis; coproporphyrinogen-III from 5-aminolevulinate: step 1/4. Its function is as follows. Catalyzes an early step in the biosynthesis of tetrapyrroles. Binds two molecules of 5-aminolevulinate per subunit, each at a distinct site, and catalyzes their condensation to form porphobilinogen. The chain is Delta-aminolevulinic acid dehydratase (hemB) from Staphylococcus aureus (strain NCTC 8325 / PS 47).